Reading from the N-terminus, the 557-residue chain is Trigger factor (557 aa).

Residues Gly-169 to Pro-255 enclose the PPIase FKBP-type domain. The segment at Trp-438–Lys-557 is disordered. Residues Ser-455–Ser-466 are compositionally biased toward basic and acidic residues.

Belongs to the FKBP-type PPIase family. Tig subfamily.

It is found in the cytoplasm. It carries out the reaction [protein]-peptidylproline (omega=180) = [protein]-peptidylproline (omega=0). Its function is as follows. Involved in protein export. Acts as a chaperone by maintaining the newly synthesized protein in an open conformation. Functions as a peptidyl-prolyl cis-trans isomerase. The polypeptide is Trigger factor (Synechococcus sp. (strain JA-3-3Ab) (Cyanobacteria bacterium Yellowstone A-Prime)).